The following is a 95-amino-acid chain: UPF0358 protein BT9727_3692 (95 aa).

The protein belongs to the UPF0358 family.

The protein is UPF0358 protein BT9727_3692 of Bacillus thuringiensis subsp. konkukian (strain 97-27).